We begin with the raw amino-acid sequence, 753 residues long: Neuroendocrine convertase 1 (753 aa).

A signal peptide spans 1 to 27; it reads MEQRGWTLQCTAFAFFCVWCALSSVKA. Positions 28–110 are excised as a propeptide; sequence KRQFVNEWAA…QQYEKERSKR (83 aa). Residues 129–450 enclose the Peptidase S8 domain; that stretch reads QWYLQDTRMT…FGLLNAKALV (322 aa). Catalysis depends on charge relay system residues aspartate 167 and histidine 208. Intrachain disulfides connect cysteine 225-cysteine 374 and cysteine 317-cysteine 347. Serine 382 (charge relay system) is an active-site residue. Residue asparagine 401 is glycosylated (N-linked (GlcNAc...) asparagine). The P/Homo B domain maps to 460 to 597; it reads NVPEKKECVV…KLILHGTSSQ (138 aa). The cysteines at positions 467 and 494 are disulfide-linked. Residues 633–651 show a composition bias toward polar residues; sequence QKSLNGNLLVPKNSSSSNV. A disordered region spans residues 633–663; sequence QKSLNGNLLVPKNSSSSNVEGRRDEQVQGTP. Asparagine 645 is a glycosylation site (N-linked (GlcNAc...) asparagine).

It belongs to the peptidase S8 family. Furin subfamily. It depends on Ca(2+) as a cofactor.

The protein resides in the cytoplasmic vesicle. Its subcellular location is the secretory vesicle. The enzyme catalyses Release of protein hormones, neuropeptides and renin from their precursors, generally by hydrolysis of -Lys-Arg-|- bonds.. Its function is as follows. Involved in the processing of hormone and other protein precursors at sites comprised of pairs of basic amino acid residues. Substrates include POMC, renin, enkephalin, dynorphin, somatostatin, insulin and AGRP. The protein is Neuroendocrine convertase 1 (Pcsk1) of Mus cookii (Cook's mouse).